We begin with the raw amino-acid sequence, 291 residues long: tRNA U34 carboxymethyltransferase (291 aa).

Carboxy-S-adenosyl-L-methionine contacts are provided by residues K61, W75, K80, G100, D122–S124, V149–E150, Y169, and R284.

Belongs to the class I-like SAM-binding methyltransferase superfamily. CmoB family. Homotetramer.

The enzyme catalyses carboxy-S-adenosyl-L-methionine + 5-hydroxyuridine(34) in tRNA = 5-carboxymethoxyuridine(34) in tRNA + S-adenosyl-L-homocysteine + H(+). Functionally, catalyzes carboxymethyl transfer from carboxy-S-adenosyl-L-methionine (Cx-SAM) to 5-hydroxyuridine (ho5U) to form 5-carboxymethoxyuridine (cmo5U) at position 34 in tRNAs. The protein is tRNA U34 carboxymethyltransferase of Campylobacter jejuni subsp. jejuni serotype O:6 (strain 81116 / NCTC 11828).